We begin with the raw amino-acid sequence, 55 residues long: Conotoxin Cal6.40 (55 aa).

Residues 1 to 21 (MSGSGVLLLTLLLLVPLSALA) form the signal peptide. Cystine bridges form between Cys-24-Cys-36, Cys-29-Cys-41, and Cys-35-Cys-50.

In terms of tissue distribution, expressed by the venom duct.

Its subcellular location is the secreted. Its function is as follows. Probable neurotoxin. The polypeptide is Conotoxin Cal6.40 (Californiconus californicus (California cone)).